The following is a 773-amino-acid chain: Ribosomal protein S6 kinase alpha-4 (773 aa).

The Protein kinase 1 domain maps to 33–301; the sequence is FALLKVLGTG…AQEVKSHPFF (269 aa). ATP-binding positions include 39–47 and Lys65; that span reads LGTGAYGKV. Residue Asp161 is the Proton acceptor of the active site. The residue at position 196 (Ser196) is a Phosphoserine; by autocatalysis. Residues 302–371 form the AGC-kinase C-terminal domain; sequence QGLDWVALAA…VAPSILFDHN (70 aa). Ser343 is modified (phosphoserine; by MAPK1, MAPK3 and MAPK14). Ser347 carries the phosphoserine modification. Phosphoserine; by autocatalysis occurs at positions 360 and 365. Residues 417–425 and Lys440 each bind ATP; that span reads LGQGSFSVC. Residues 417–674 form the Protein kinase 2 domain; the sequence is LGQGSFSVCR…LEGLRSSSWL (258 aa). Catalysis depends on Asp530, which acts as the Proton acceptor. Position 542 is a phosphothreonine (Thr542). Thr568 carries the phosphothreonine; by MAPK1, MAPK3 and MAPK14 modification. A phosphoserine mark is found at Ser634 and Ser678. Disordered stretches follow at residues 674-696 and 728-773; these read LQDGSARSSPPLRTPDVLESSGP and AKRR…LSPS. Thr687 bears the Phosphothreonine mark. Residues Ser737 and Ser745 each carry the phosphoserine; by autocatalysis modification.

It belongs to the protein kinase superfamily. AGC Ser/Thr protein kinase family. S6 kinase subfamily. As to quaternary structure, forms a complex with either MAPK1/ERK2 or MAPK3/ERK1 in quiescent cells which transiently dissociates following mitogenic stimulation. Also associates with MAPK14/p38-alpha. Activated RPS6KA4 associates with and phosphorylates the NF-kappa-B p65 subunit RELA. It depends on Mg(2+) as a cofactor. Post-translationally, ser-343 and Thr-568 phosphorylation is required for kinase activity. Ser-343 and Ser-196 are autophosphorylated by the C-terminal kinase domain, and their phosphorylation is essential for the catalytic activity of the N-terminal kinase domain. Phosphorylated at Ser-343, Thr-568 and Thr-687 by MAPK1/ERK2, MAPK3/ERK1 and MAPK14/p38-alpha. Autophosphorylated at Ser-737 and Ser-745 by the N-terminal kinase domain.

The protein resides in the nucleus. It catalyses the reaction L-seryl-[protein] + ATP = O-phospho-L-seryl-[protein] + ADP + H(+). It carries out the reaction L-threonyl-[protein] + ATP = O-phospho-L-threonyl-[protein] + ADP + H(+). Its activity is regulated as follows. Activated by phosphorylation at Ser-343, Thr-568 and Thr-687 by MAPK1/ERK2, MAPK3/ERK1 and MAPK14/p38-alpha, and by further autophosphorylation of Ser-196, Ser-360 and Ser-365 by the activated C-terminal kinase domain. Its function is as follows. Serine/threonine-protein kinase that is required for the mitogen or stress-induced phosphorylation of the transcription factors CREB1 and ATF1 and for the regulation of the transcription factor RELA, and that contributes to gene activation by histone phosphorylation and functions in the regulation of inflammatory genes. Phosphorylates CREB1 and ATF1 in response to mitogenic or stress stimuli such as UV-C irradiation, epidermal growth factor (EGF) and anisomycin. Plays an essential role in the control of RELA transcriptional activity in response to TNF. Phosphorylates 'Ser-10' of histone H3 in response to mitogenics, stress stimuli and EGF, which results in the transcriptional activation of several immediate early genes, including proto-oncogenes c-fos/FOS and c-jun/JUN. May also phosphorylate 'Ser-28' of histone H3. Mediates the mitogen- and stress-induced phosphorylation of high mobility group protein 1 (HMGN1/HMG14). In lipopolysaccharide-stimulated primary macrophages, acts downstream of the Toll-like receptor TLR4 to limit the production of pro-inflammatory cytokines. Functions probably by inducing transcription of the MAP kinase phosphatase DUSP1 and the anti-inflammatory cytokine interleukin 10 (IL10), via CREB1 and ATF1 transcription factors. The polypeptide is Ribosomal protein S6 kinase alpha-4 (Rps6ka4) (Mus musculus (Mouse)).